Consider the following 375-residue polypeptide: Hydrogenase-1 small chain (375 aa).

A signal peptide (tat-type signal) is located at residues 1 to 47 (MNTNNEETFYQAMRRKGVSRRSFLKYCSLAATSLGLGAAMTPRIAWA). [4Fe-4S] cluster contacts are provided by Cys-64, Cys-67, Cys-162, Cys-196, His-234, Cys-237, Cys-262, and Cys-268. The [3Fe-4S] cluster site is built by Cys-277, Cys-296, and Cys-299. The segment at 353–375 (HNRHKQQLADAGQQSPDNEDKQA) is disordered.

It belongs to the [NiFe]/[NiFeSe] hydrogenase small subunit family. In terms of assembly, heterodimer of a large and a small subunit. It depends on [4Fe-4S] cluster as a cofactor. [3Fe-4S] cluster serves as cofactor. In terms of processing, predicted to be exported by the Tat system. The position of the signal peptide cleavage has not been experimentally proven.

The protein resides in the cell membrane. The catalysed reaction is H2 + A = AH2. The protein is Hydrogenase-1 small chain (hyaA) of Citrobacter freundii.